A 155-amino-acid chain; its full sequence is Endoribonuclease YbeY (155 aa).

Positions 114, 118, and 124 each coordinate Zn(2+).

The protein belongs to the endoribonuclease YbeY family. Zn(2+) is required as a cofactor.

The protein localises to the cytoplasm. Single strand-specific metallo-endoribonuclease involved in late-stage 70S ribosome quality control and in maturation of the 3' terminus of the 16S rRNA. The chain is Endoribonuclease YbeY from Escherichia coli O157:H7.